The chain runs to 268 residues: Tryptophan synthase alpha chain (268 aa).

Residues E49 and D60 each act as proton acceptor in the active site.

The protein belongs to the TrpA family. As to quaternary structure, tetramer of two alpha and two beta chains.

The catalysed reaction is (1S,2R)-1-C-(indol-3-yl)glycerol 3-phosphate + L-serine = D-glyceraldehyde 3-phosphate + L-tryptophan + H2O. It participates in amino-acid biosynthesis; L-tryptophan biosynthesis; L-tryptophan from chorismate: step 5/5. The alpha subunit is responsible for the aldol cleavage of indoleglycerol phosphate to indole and glyceraldehyde 3-phosphate. This is Tryptophan synthase alpha chain from Escherichia coli O17:K52:H18 (strain UMN026 / ExPEC).